The primary structure comprises 137 residues: Small ribosomal subunit protein uS12 (137 aa).

A disordered region spans residues 1-25; that stretch reads MPTINQLVRQGRKSKTYKSDSPALS. The residue at position 102 (aspartate 102) is a 3-methylthioaspartic acid.

It belongs to the universal ribosomal protein uS12 family. As to quaternary structure, part of the 30S ribosomal subunit. Contacts proteins S8 and S17. May interact with IF1 in the 30S initiation complex.

Its function is as follows. With S4 and S5 plays an important role in translational accuracy. Interacts with and stabilizes bases of the 16S rRNA that are involved in tRNA selection in the A site and with the mRNA backbone. Located at the interface of the 30S and 50S subunits, it traverses the body of the 30S subunit contacting proteins on the other side and probably holding the rRNA structure together. The combined cluster of proteins S8, S12 and S17 appears to hold together the shoulder and platform of the 30S subunit. In Finegoldia magna (strain ATCC 29328 / DSM 20472 / WAL 2508) (Peptostreptococcus magnus), this protein is Small ribosomal subunit protein uS12.